A 152-amino-acid chain; its full sequence is Large ribosomal subunit protein bL9 (152 aa).

This sequence belongs to the bacterial ribosomal protein bL9 family.

In terms of biological role, binds to the 23S rRNA. The sequence is that of Large ribosomal subunit protein bL9 from Mycobacterium ulcerans (strain Agy99).